Reading from the N-terminus, the 344-residue chain is D-beta-hydroxybutyrate dehydrogenase, mitochondrial (344 aa).

Residues 1 to 46 (MLTARLSRPLSQLPRKTLNFSDRENGTRGSLLLYSAPFVPVGRRTY) constitute a mitochondrion transit peptide. 59 to 83 (LITGCDSGFGFSLAKHLHSEGFLVF) provides a ligand contact to NAD(+). Lys-73 and Lys-97 each carry N6-acetyllysine. Position 103 is an N6-acetyllysine; alternate (Lys-103). Lys-103 is modified (N6-succinyllysine; alternate). Lys-177 bears the N6-acetyllysine mark. Ser-195 contacts substrate. Tyr-208 functions as the Proton acceptor in the catalytic mechanism. At Lys-212 the chain carries N6-acetyllysine. O-linked (GlcNAc) serine glycosylation occurs at Ser-219. The residue at position 246 (Ser-246) is a Phosphoserine. Lys-260 is modified (N6-acetyllysine; alternate). Lys-260 is subject to N6-succinyllysine; alternate. At Lys-281 the chain carries N6-acetyllysine.

The protein belongs to the short-chain dehydrogenases/reductases (SDR) family. As to quaternary structure, homotetramer.

The protein localises to the mitochondrion inner membrane. Its subcellular location is the mitochondrion matrix. The enzyme catalyses (R)-3-hydroxybutanoate + NAD(+) = acetoacetate + NADH + H(+). Requires phosphatidylcholine as an allosteric activator for enzymatic activity. The protein is D-beta-hydroxybutyrate dehydrogenase, mitochondrial of Bos taurus (Bovine).